A 471-amino-acid chain; its full sequence is Trigger factor (471 aa).

The 96-residue stretch at 169–264 (GDVAVVDFKG…LKEIKEKELP (96 aa)) folds into the PPIase FKBP-type domain.

The protein belongs to the FKBP-type PPIase family. Tig subfamily.

It is found in the cytoplasm. It catalyses the reaction [protein]-peptidylproline (omega=180) = [protein]-peptidylproline (omega=0). Functionally, involved in protein export. Acts as a chaperone by maintaining the newly synthesized protein in an open conformation. Functions as a peptidyl-prolyl cis-trans isomerase. The polypeptide is Trigger factor (Nostoc sp. (strain PCC 7120 / SAG 25.82 / UTEX 2576)).